The chain runs to 635 residues: Threonine--tRNA ligase (635 aa).

The 61-residue stretch at 1 to 61 (MVSIRLPDGS…DHDVALAIVT (61 aa)) folds into the TGS domain. The tract at residues 242 to 533 (DHRKLGKQLD…LIEHHAGAMP (292 aa)) is catalytic. Cys333, His384, and His510 together coordinate Zn(2+).

The protein belongs to the class-II aminoacyl-tRNA synthetase family. Homodimer. Zn(2+) serves as cofactor.

The protein resides in the cytoplasm. The catalysed reaction is tRNA(Thr) + L-threonine + ATP = L-threonyl-tRNA(Thr) + AMP + diphosphate + H(+). Its function is as follows. Catalyzes the attachment of threonine to tRNA(Thr) in a two-step reaction: L-threonine is first activated by ATP to form Thr-AMP and then transferred to the acceptor end of tRNA(Thr). Also edits incorrectly charged L-seryl-tRNA(Thr). The chain is Threonine--tRNA ligase from Paraburkholderia phymatum (strain DSM 17167 / CIP 108236 / LMG 21445 / STM815) (Burkholderia phymatum).